The following is a 257-amino-acid chain: Cyclin-C1-1 (257 aa).

It belongs to the cyclin family. Cyclin C subfamily.

This is Cyclin-C1-1 from Oryza sativa subsp. japonica (Rice).